Here is a 170-residue protein sequence, read N- to C-terminus: Double homeobox protein 1 (170 aa).

2 DNA-binding regions (homeobox) span residues 19–78 (GRRM…LRQH) and 94–153 (GRRK…RGQS). The interval 75–100 (LRQHRRQSRPWPGRRDPQKGRRKRTA) is disordered.

This sequence belongs to the paired homeobox family. In terms of tissue distribution, expressed in rhabdomyosarcoma TE671 cells as well as in several other normal and cancer cells.

The protein resides in the nucleus. In terms of biological role, probable transcription activator. Binds the P5 DNA element sequence 5'-GATCTGAGTCTAATTGAGAATTACTGTAC-3'. This chain is Double homeobox protein 1 (DUX1), found in Homo sapiens (Human).